The chain runs to 128 residues: Glycine cleavage system H protein (128 aa).

Residues 24–106 enclose the Lipoyl-binding domain; the sequence is VYSVGITEHA…YTDGWLFSIK (83 aa). Residue K65 is modified to N6-lipoyllysine.

The protein belongs to the GcvH family. As to quaternary structure, the glycine cleavage system is composed of four proteins: P, T, L and H. (R)-lipoate is required as a cofactor.

Its function is as follows. The glycine cleavage system catalyzes the degradation of glycine. The H protein shuttles the methylamine group of glycine from the P protein to the T protein. In Yersinia pseudotuberculosis serotype O:1b (strain IP 31758), this protein is Glycine cleavage system H protein.